Reading from the N-terminus, the 859-residue chain is Ribose import ATP-binding protein RbsA 1 (859 aa).

A disordered region spans residues 1-351 (MRASLENGDD…AARAPDEASE (351 aa)). Positions 1 to 353 (MRASLENGDD…RAPDEASEEA (353 aa)) are unknown. A compositionally biased stretch (basic and acidic residues) spans 8–17 (GDDHDAHRLV). Over residues 28–43 (RAARRRAFARARRGER) the composition is skewed to basic residues. Composition is skewed to basic and acidic residues over residues 44–80 (RARG…DRRA), 89–129 (RREQ…EEGG), and 137–167 (RERE…EGDR). The span at 168 to 179 (RRRRSRDPRRHP) shows a compositional bias: basic residues. 5 stretches are compositionally biased toward basic and acidic residues: residues 193 to 214 (GARE…GARE), 239 to 250 (RLDGRAVRDRGV), 263 to 281 (AGGD…RDVR), 288 to 301 (DSPR…EEVG), and 308 to 323 (DSGR…REDV). 2 consecutive ABC transporter domains span residues 358–594 (LALT…VGRR) and 607–851 (RDAA…TSDV). 390-397 (GENGAGKS) provides a ligand contact to ATP.

The protein belongs to the ABC transporter superfamily. Ribose importer (TC 3.A.1.2.1) family. In terms of assembly, the complex is composed of an ATP-binding protein (RbsA), two transmembrane proteins (RbsC) and a solute-binding protein (RbsB).

It localises to the cell inner membrane. The enzyme catalyses D-ribose(out) + ATP + H2O = D-ribose(in) + ADP + phosphate + H(+). In terms of biological role, part of the ABC transporter complex RbsABC involved in ribose import. Responsible for energy coupling to the transport system. The protein is Ribose import ATP-binding protein RbsA 1 of Burkholderia pseudomallei (strain 1710b).